The sequence spans 369 residues: Aminomethyltransferase (369 aa).

Belongs to the GcvT family. As to quaternary structure, the glycine cleavage system is composed of four proteins: P, T, L and H.

The enzyme catalyses N(6)-[(R)-S(8)-aminomethyldihydrolipoyl]-L-lysyl-[protein] + (6S)-5,6,7,8-tetrahydrofolate = N(6)-[(R)-dihydrolipoyl]-L-lysyl-[protein] + (6R)-5,10-methylene-5,6,7,8-tetrahydrofolate + NH4(+). Its function is as follows. The glycine cleavage system catalyzes the degradation of glycine. In Synechococcus sp. (strain CC9311), this protein is Aminomethyltransferase.